The primary structure comprises 180 residues: Dual-action ribosomal maturation protein DarP (180 aa).

Residues Met-1–Ile-13 are compositionally biased toward basic and acidic residues. The interval Met-1 to Arg-21 is disordered.

It belongs to the DarP family.

It is found in the cytoplasm. Its function is as follows. Member of a network of 50S ribosomal subunit biogenesis factors which assembles along the 30S-50S interface, preventing incorrect 23S rRNA structures from forming. Promotes peptidyl transferase center (PTC) maturation. The protein is Dual-action ribosomal maturation protein DarP of Methylobacillus flagellatus (strain ATCC 51484 / DSM 6875 / VKM B-1610 / KT).